The primary structure comprises 77 residues: Probable Fe(2+)-trafficking protein (77 aa).

Belongs to the Fe(2+)-trafficking protein family.

Functionally, could be a mediator in iron transactions between iron acquisition and iron-requiring processes, such as synthesis and/or repair of Fe-S clusters in biosynthetic enzymes. The chain is Probable Fe(2+)-trafficking protein from Baumannia cicadellinicola subsp. Homalodisca coagulata.